A 1034-amino-acid chain; its full sequence is Condensin complex subunit 3 (1034 aa).

HEAT repeat units lie at residues 95 to 132 (SPVN…NLPE), 139 to 176 (DLFD…PSDP), 178 to 213 (CPVS…SLPK), 242 to 279 (LTIA…QYSE), 281 to 317 (DVLD…LVQN), 439 to 476 (TSLI…PIVT), and 618 to 655 (DFAR…LFGM). Positions 663–672 (TNPDDSQCKA) are enriched in polar residues. Residues 663-693 (TNPDDSQCKAQENADEDISEQEKPGSVDENL) form a disordered region. HEAT repeat units follow at residues 703–740 (ATVN…SGRL), 785–823 (CFAE…DLTR), and 878–915 (ENST…SGRE). Basic and acidic residues predominate over residues 909-949 (QLRSGREEHRVSKETEPQVSKETEDRTNLQENEEGKQKDEA). A disordered region spans residues 909–1034 (QLRSGREEHR…LSKLLNEEAN (126 aa)). The span at 964 to 984 (RGKATKGRRKGPAAAATRRKA) shows a compositional bias: basic residues. Basic and acidic residues predominate over residues 985-999 (SKAEEAEAEMERQEE).

It belongs to the CND3 (condensin subunit 3) family. Component of the condensin complex, which contains the XCAP-E/SMC2 and XCAP-C/SMC4 heterodimer, and three non SMC subunits that probably regulate the complex: XCAP-H/NCAPH, XCAP-D2/NCAPD2 and XCAP-G/NCAPG. In terms of processing, phosphorylated by cdk1. Its phosphorylation, as well as that of XCAP-D2 and XCAP-H subunits, activates the condensin complex and is required for chromosome condensation.

Its subcellular location is the nucleus. The protein localises to the cytoplasm. It localises to the chromosome. In terms of biological role, regulatory subunit of the condensin complex, a complex required for conversion of interphase chromatin into mitotic-like condense chromosomes. The condensin complex probably introduces positive supercoils into relaxed DNA in the presence of type I topoisomerases and converts nicked DNA into positive knotted forms in the presence of type II topoisomerase. The polypeptide is Condensin complex subunit 3 (ncapg) (Xenopus laevis (African clawed frog)).